A 465-amino-acid polypeptide reads, in one-letter code: Cysteine--tRNA ligase (465 aa).

Zn(2+) is bound at residue C27. Residues 29 to 39 (PTVYDFIHIGN) carry the 'HIGH' region motif. Positions 207, 232, and 236 each coordinate Zn(2+). A 'KMSKS' region motif is present at residues 264–268 (KMSKS). K267 lines the ATP pocket.

The protein belongs to the class-I aminoacyl-tRNA synthetase family. As to quaternary structure, monomer. Requires Zn(2+) as cofactor.

It localises to the cytoplasm. The enzyme catalyses tRNA(Cys) + L-cysteine + ATP = L-cysteinyl-tRNA(Cys) + AMP + diphosphate. This chain is Cysteine--tRNA ligase, found in Caldicellulosiruptor saccharolyticus (strain ATCC 43494 / DSM 8903 / Tp8T 6331).